We begin with the raw amino-acid sequence, 81 residues long: uncharacterized protein (81 aa).

A SpoVT-AbrB domain is found at Met1–Thr45.

This sequence to B.subtilis SpoVT.

This is an uncharacterized protein from Mycobacterium bovis (strain ATCC BAA-935 / AF2122/97).